Reading from the N-terminus, the 246-residue chain is 3-deoxy-manno-octulosonate cytidylyltransferase (246 aa).

It belongs to the KdsB family.

The protein localises to the cytoplasm. It carries out the reaction 3-deoxy-alpha-D-manno-oct-2-ulosonate + CTP = CMP-3-deoxy-beta-D-manno-octulosonate + diphosphate. It functions in the pathway nucleotide-sugar biosynthesis; CMP-3-deoxy-D-manno-octulosonate biosynthesis; CMP-3-deoxy-D-manno-octulosonate from 3-deoxy-D-manno-octulosonate and CTP: step 1/1. Its pathway is bacterial outer membrane biogenesis; lipopolysaccharide biosynthesis. Activates KDO (a required 8-carbon sugar) for incorporation into bacterial lipopolysaccharide in Gram-negative bacteria. The protein is 3-deoxy-manno-octulosonate cytidylyltransferase of Rickettsia felis (strain ATCC VR-1525 / URRWXCal2) (Rickettsia azadi).